A 451-amino-acid chain; its full sequence is GTPase Der (451 aa).

EngA-type G domains are found at residues 5–170 (PVVA…VAPP) and 186–359 (IKLA…AAAF). GTP contacts are provided by residues 11-18 (GRPNVGKS), 58-62 (DTGGF), 122-125 (NKAE), 192-199 (GRPNVGKS), 239-243 (DTAGL), and 304-307 (NKWD). Positions 360–444 (AKLSTPRLTR…PLRIEFKSSR (85 aa)) constitute a KH-like domain.

This sequence belongs to the TRAFAC class TrmE-Era-EngA-EngB-Septin-like GTPase superfamily. EngA (Der) GTPase family. In terms of assembly, associates with the 50S ribosomal subunit.

Its function is as follows. GTPase that plays an essential role in the late steps of ribosome biogenesis. This is GTPase Der from Bordetella bronchiseptica (strain ATCC BAA-588 / NCTC 13252 / RB50) (Alcaligenes bronchisepticus).